We begin with the raw amino-acid sequence, 191 residues long: UPF0149 protein plu3602 (191 aa).

The protein belongs to the UPF0149 family.

In Photorhabdus laumondii subsp. laumondii (strain DSM 15139 / CIP 105565 / TT01) (Photorhabdus luminescens subsp. laumondii), this protein is UPF0149 protein plu3602.